Consider the following 875-residue polypeptide: Serine/threonine-protein phosphatase 4 regulatory subunit 4 (875 aa).

HEAT repeat units follow at residues isoleucine 215 to valine 253 and valine 254 to threonine 292. A coiled-coil region spans residues methionine 686 to serine 730. Residues lysine 718 to arginine 739 show a composition bias toward basic and acidic residues. The interval lysine 718–threonine 773 is disordered. A compositionally biased stretch (polar residues) spans threonine 740–serine 764. Position 777 is a phosphoserine (serine 777). Threonine 799 carries the post-translational modification Phosphothreonine. The segment covering arginine 825–lysine 859 has biased composition (polar residues). Positions arginine 825–proline 875 are disordered. Residues alanine 866–proline 875 show a composition bias toward basic residues.

In terms of assembly, serine/threonine-protein phosphatase 4 (PP4) occurs in different assemblies of the catalytic and one or more regulatory subunits. Component of the PP4 complex PPP4C-PPP4R4.

It localises to the cytoplasm. Functionally, putative regulatory subunit of serine/threonine-protein phosphatase 4. In Mus musculus (Mouse), this protein is Serine/threonine-protein phosphatase 4 regulatory subunit 4 (Ppp4r4).